A 161-amino-acid polypeptide reads, in one-letter code: Nucleotide-binding protein Bxeno_A3642 (161 aa).

Belongs to the YajQ family.

Its function is as follows. Nucleotide-binding protein. This Paraburkholderia xenovorans (strain LB400) protein is Nucleotide-binding protein Bxeno_A3642.